Consider the following 243-residue polypeptide: 1-(5-phosphoribosyl)-5-[(5-phosphoribosylamino)methylideneamino] imidazole-4-carboxamide isomerase (243 aa).

Catalysis depends on aspartate 8, which acts as the Proton acceptor. Aspartate 130 serves as the catalytic Proton donor.

This sequence belongs to the HisA/HisF family.

The protein resides in the cytoplasm. The catalysed reaction is 1-(5-phospho-beta-D-ribosyl)-5-[(5-phospho-beta-D-ribosylamino)methylideneamino]imidazole-4-carboxamide = 5-[(5-phospho-1-deoxy-D-ribulos-1-ylimino)methylamino]-1-(5-phospho-beta-D-ribosyl)imidazole-4-carboxamide. The protein operates within amino-acid biosynthesis; L-histidine biosynthesis; L-histidine from 5-phospho-alpha-D-ribose 1-diphosphate: step 4/9. The polypeptide is 1-(5-phosphoribosyl)-5-[(5-phosphoribosylamino)methylideneamino] imidazole-4-carboxamide isomerase (Cellvibrio japonicus (strain Ueda107) (Pseudomonas fluorescens subsp. cellulosa)).